The primary structure comprises 526 residues: Bifunctional purine biosynthesis protein PurH (526 aa).

The MGS-like domain maps to 1–145; the sequence is MIRTALLSVS…KNHQDVTVLI (145 aa).

The protein belongs to the PurH family.

The enzyme catalyses (6R)-10-formyltetrahydrofolate + 5-amino-1-(5-phospho-beta-D-ribosyl)imidazole-4-carboxamide = 5-formamido-1-(5-phospho-D-ribosyl)imidazole-4-carboxamide + (6S)-5,6,7,8-tetrahydrofolate. It catalyses the reaction IMP + H2O = 5-formamido-1-(5-phospho-D-ribosyl)imidazole-4-carboxamide. It participates in purine metabolism; IMP biosynthesis via de novo pathway; 5-formamido-1-(5-phospho-D-ribosyl)imidazole-4-carboxamide from 5-amino-1-(5-phospho-D-ribosyl)imidazole-4-carboxamide (10-formyl THF route): step 1/1. Its pathway is purine metabolism; IMP biosynthesis via de novo pathway; IMP from 5-formamido-1-(5-phospho-D-ribosyl)imidazole-4-carboxamide: step 1/1. The sequence is that of Bifunctional purine biosynthesis protein PurH from Polynucleobacter asymbioticus (strain DSM 18221 / CIP 109841 / QLW-P1DMWA-1) (Polynucleobacter necessarius subsp. asymbioticus).